Reading from the N-terminus, the 246-residue chain is Flagellar brake protein YcgR (246 aa).

The PilZ domain maps to 122 to 234 (QRREFFRIQT…PMETIIQRYV (113 aa)).

The protein belongs to the YcgR family. Monomer. Interacts with the flagellar basal bodies.

It localises to the bacterial flagellum basal body. Functionally, acts as a flagellar brake, regulating swimming and swarming in a bis-(3'-5') cyclic diguanylic acid (c-di-GMP)-dependent manner. Binds 1 c-di-GMP dimer per subunit. Increasing levels of c-di-GMP lead to decreased motility. In Chromobacterium violaceum (strain ATCC 12472 / DSM 30191 / JCM 1249 / CCUG 213 / NBRC 12614 / NCIMB 9131 / NCTC 9757 / MK), this protein is Flagellar brake protein YcgR.